The chain runs to 351 residues: Ion-translocating oxidoreductase complex subunit D (351 aa).

4 helical membrane passes run 18 to 38 (IMLL…YFFG), 40 to 60 (GSLI…GAVL), 87 to 107 (LPPL…IVIA), and 121 to 141 (PAMV…TSWL). FMN phosphoryl threonine is present on threonine 185. 5 helical membrane passes run 211 to 231 (VLAG…GLLL), 241 to 261 (IPVS…MIAP), 264 to 284 (FASP…FFIA), 298 to 318 (LIFG…GGYP), and 321 to 341 (VAFA…YTQP).

The protein belongs to the NqrB/RnfD family. The complex is composed of six subunits: RnfA, RnfB, RnfC, RnfD, RnfE and RnfG. It depends on FMN as a cofactor.

Its subcellular location is the cell inner membrane. In terms of biological role, part of a membrane-bound complex that couples electron transfer with translocation of ions across the membrane. This Yersinia pestis protein is Ion-translocating oxidoreductase complex subunit D.